The following is a 347-amino-acid chain: Dihydroorotase (347 aa).

Residues His-17 and His-19 each coordinate Zn(2+). Residues 19–21 (HLR) and Asn-45 each bind substrate. Positions 103, 140, and 178 each coordinate Zn(2+). Lys-103 carries the post-translational modification N6-carboxylysine. His-140 contacts substrate. Residue Leu-223 coordinates substrate. Asp-251 is a binding site for Zn(2+). Residue Asp-251 is part of the active site. Residues His-255 and Ala-267 each contribute to the substrate site.

The protein belongs to the metallo-dependent hydrolases superfamily. DHOase family. Class II DHOase subfamily. In terms of assembly, homodimer. Requires Zn(2+) as cofactor.

The catalysed reaction is (S)-dihydroorotate + H2O = N-carbamoyl-L-aspartate + H(+). It participates in pyrimidine metabolism; UMP biosynthesis via de novo pathway; (S)-dihydroorotate from bicarbonate: step 3/3. Functionally, catalyzes the reversible cyclization of carbamoyl aspartate to dihydroorotate. The protein is Dihydroorotase of Pectobacterium atrosepticum (strain SCRI 1043 / ATCC BAA-672) (Erwinia carotovora subsp. atroseptica).